Reading from the N-terminus, the 309-residue chain is UDP-N-acetylenolpyruvoylglucosamine reductase (309 aa).

The region spanning 34–221 (RVGGPAQVLF…TAAREAAQPI (188 aa)) is the FAD-binding PCMH-type domain. The active site involves Arg-179. Ser-228 (proton donor) is an active-site residue. Glu-298 is an active-site residue.

It belongs to the MurB family. It depends on FAD as a cofactor.

It is found in the cytoplasm. The enzyme catalyses UDP-N-acetyl-alpha-D-muramate + NADP(+) = UDP-N-acetyl-3-O-(1-carboxyvinyl)-alpha-D-glucosamine + NADPH + H(+). It participates in cell wall biogenesis; peptidoglycan biosynthesis. Its function is as follows. Cell wall formation. This Methylorubrum extorquens (strain PA1) (Methylobacterium extorquens) protein is UDP-N-acetylenolpyruvoylglucosamine reductase.